The sequence spans 50 residues: Sperm protamine P1 (50 aa).

Disulfide bonds link Cys7–Cys15 and Cys39–Cys47.

This sequence belongs to the protamine P1 family. In terms of assembly, cross-linked by interchain disulfide bonds around the DNA-helix. In terms of tissue distribution, testis.

Its subcellular location is the nucleus. The protein localises to the chromosome. Functionally, protamines substitute for histones in the chromatin of sperm during the haploid phase of spermatogenesis. They compact sperm DNA into a highly condensed, stable and inactive complex. The protein is Sperm protamine P1 (PRM1) of Oryctolagus cuniculus (Rabbit).